A 410-amino-acid polypeptide reads, in one-letter code: Chorismate synthase (410 aa).

The NADP(+) site is built by Arg-43 and Arg-49. FMN-binding positions include 143-145 (RSS), 264-265 (QA), Gly-308, 323-327 (KPIST), and Arg-349.

It belongs to the chorismate synthase family. Homotetramer. FMNH2 serves as cofactor.

It catalyses the reaction 5-O-(1-carboxyvinyl)-3-phosphoshikimate = chorismate + phosphate. It participates in metabolic intermediate biosynthesis; chorismate biosynthesis; chorismate from D-erythrose 4-phosphate and phosphoenolpyruvate: step 7/7. Functionally, catalyzes the anti-1,4-elimination of the C-3 phosphate and the C-6 proR hydrogen from 5-enolpyruvylshikimate-3-phosphate (EPSP) to yield chorismate, which is the branch point compound that serves as the starting substrate for the three terminal pathways of aromatic amino acid biosynthesis. This reaction introduces a second double bond into the aromatic ring system. The chain is Chorismate synthase from Corynebacterium glutamicum (strain ATCC 13032 / DSM 20300 / JCM 1318 / BCRC 11384 / CCUG 27702 / LMG 3730 / NBRC 12168 / NCIMB 10025 / NRRL B-2784 / 534).